The following is an 828-amino-acid chain: USP6 N-terminal-like protein (828 aa).

An N-acetylmethionine modification is found at Met-1. Positions 100 to 292 constitute a Rab-GAP TBC domain; that stretch reads GIPLQLRGEV…RIWDIYIFEG (193 aa). The span at 355–367 shows a compositional bias: basic and acidic residues; it reads DLPEPGKEDEYPK. The tract at residues 355 to 722 is disordered; it reads DLPEPGKEDE…NSGSPKNGKL (368 aa). Ser-391, Ser-396, and Ser-400 each carry phosphoserine. The segment covering 434–451 has biased composition (basic and acidic residues); the sequence is KSVEEESKKLKDEADFQR. Positions 465-478 are enriched in low complexity; it reads NHAAANQNSNATSN. 2 stretches are compositionally biased toward basic and acidic residues: residues 498 to 508 and 535 to 544; these read RTAKYTMEGKG and KALDAEDGKR. A phosphoserine mark is found at Ser-546 and Ser-549. Tyr-582 is subject to Phosphotyrosine. Ser-585 carries the post-translational modification Phosphoserine. The segment covering 592 to 603 has biased composition (polar residues); it reads PSSSPSKVSNKF. 5 positions are modified to phosphoserine: Ser-642, Ser-655, Ser-659, Ser-676, and Ser-680. Composition is skewed to polar residues over residues 648 to 666 and 673 to 683; these read TANS…QLNP and STLSVSASPEK. The segment covering 686-697 has biased composition (low complexity); sequence SRPSPLVLPSSR. The residue at position 716 (Ser-716) is a Phosphoserine. Tyr-729 carries the phosphotyrosine modification. Residues 789-817 form a disordered region; that stretch reads KASPAAEDASPSGYPYSGPPPPAYHYRNR.

As to quaternary structure, interacts with EPS8. In terms of tissue distribution, widely expressed.

It localises to the golgi apparatus. The protein resides in the cytoplasmic vesicle. Functionally, acts as a GTPase-activating protein for RAB5A and RAB43. Involved in receptor trafficking. In complex with EPS8 inhibits internalization of EGFR. Involved in retrograde transport from the endocytic pathway to the Golgi apparatus. Involved in the transport of Shiga toxin from early and recycling endosomes to the trans-Golgi network. Required for structural integrity of the Golgi complex. This Homo sapiens (Human) protein is USP6 N-terminal-like protein (USP6NL).